A 739-amino-acid chain; its full sequence is Probable beta-glucosidase L (739 aa).

The N-terminal stretch at 1 to 17 is a signal peptide; the sequence is MQTLFLSLLAAAVTVHA. N-linked (GlcNAc...) asparagine glycans are attached at residues Asn40 and Asn224. Asp252 is a catalytic residue. The N-linked (GlcNAc...) asparagine glycan is linked to Asn398.

Belongs to the glycosyl hydrolase 3 family.

The protein localises to the secreted. It catalyses the reaction Hydrolysis of terminal, non-reducing beta-D-glucosyl residues with release of beta-D-glucose.. It functions in the pathway glycan metabolism; cellulose degradation. Its function is as follows. Beta-glucosidases are one of a number of cellulolytic enzymes involved in the degradation of cellulosic biomass. Catalyzes the last step releasing glucose from the inhibitory cellobiose. The sequence is that of Probable beta-glucosidase L (bglL) from Aspergillus fumigatus (strain CBS 144.89 / FGSC A1163 / CEA10) (Neosartorya fumigata).